The primary structure comprises 553 residues: Retrotransposon Gag-like protein 3 (553 aa).

Positions 2–43 (VEDLAASYVTLKLENEILQAQVKRLMEENAALQAQIPELQKS) form a coiled coil. Disordered stretches follow at residues 38–274 (PELQ…PLDP) and 474–514 (SGGV…EAER). The span at 45-57 (AVKEHEPLRKPSE) shows a compositional bias: basic and acidic residues. The span at 58-73 (AQEPPESPEFPAARES) shows a compositional bias: low complexity. Residues 87-113 (EPTKIREPREPSAISELREPPEIKEPQ) are compositionally biased toward basic and acidic residues. Over residues 118–127 (TNESGESSAI) the composition is skewed to polar residues. Residues 132–147 (GSPEIKEPHLPPKSKE) are compositionally biased toward basic and acidic residues. Over residues 239-250 (QTVPEYQETSSQ) the composition is skewed to polar residues. The segment covering 474-483 (SGGVDSSSSS) has biased composition (low complexity). A compositionally biased stretch (polar residues) spans 495–507 (TENQPVQATSNRP). The CCHC-type zinc-finger motif lies at 523 to 537 (CLYCGHPGHFARDCP).

As to expression, expressed in embryonic myogenic progenitor cells, not expressed in adult and aged satellite cells.

The protein resides in the nucleus. Functionally, may function as a transcriptional regulator. Plays a role in postnatal myogenesis, may be involved in the regulation of satellite cells self-renewal. The polypeptide is Retrotransposon Gag-like protein 3 (Mus musculus (Mouse)).